The following is an 808-amino-acid chain: MLHDARDRQKFFSDVQYLRDMQHKVDSEYQACLRRQEYRRDPNEKKRDQFWGQETSFERSRFSSRSSSKQSSSEEDALTEPRSSIKISAFKCDSKLPAIDQTSVKQKHKSTMTVRKAEKVDPSEPSPADQAPMVLLRKRKPNLRRFTVSPESHSPRASGDRSRQKQQWPAKVPVPRGADQVVQQEGLMCNTKLKRPNQERRNLVPSSQPMTENAPDRAKKGDPSAPSQSELHPALSQAFQGKNSPQVLSEFSGPPLTPTTVGGPRKASFRFRDEDFYSILSLNSRRESDDTEEETQSEECLWVGVRSPCSPSHHKRSRFGGTSTPQAKNKNFEENAENCRGHSSRRSEPSHGSLRISNAMEPATERPSAGQRLSQDPGLPDRESATEKDRGGSENAKKSPLSWDTKSEPRQEVGVNAENVWSDCISVEHRPGTHDSEGYWKDYLNSSQNSLDYFISGRPISPRSSVNSSYNPPASFMHSALRDDIPVDLSMSSTSVHSSDSEGNSGFHVCQPLSPIRNRTPFASAENHNYFPVNSAHEFAVREAEDTTLTSQPQGAPLYTDLLLNPQGNLSLVDSSSSSPSRMNSEGHLHVSGSLQENTPFTFFAVSHFPNQNDNGSRMAASGFTDEKETSKIKADPEKLKKLQESLLEEDSEEEGDLCRICQIAGGSPSNPLLEPCGCVGSLQFVHQECLKKWLKVKITSGADLGAVKTCEMCKQGLLVDLGDFNMIEFYQKHQQSQAQNELMNSGLYLVLLLHLYEQRFAELMRLNHNQVERERLSRNYPQPRTEENENSELGDGNEGSISQSQVV.

Disordered stretches follow at residues 33-81 (LRRQ…LTEP), 101-268 (QTSV…RKAS), and 284-415 (SRRE…EVGV). The span at 34-49 (RRQEYRRDPNEKKRDQ) shows a compositional bias: basic and acidic residues. Residues 237–249 (QAFQGKNSPQVLS) show a composition bias toward polar residues. Composition is skewed to basic and acidic residues over residues 330 to 349 (KNFE…RSEP) and 379 to 397 (LPDR…ENAK). The RING-CH-type zinc finger occupies 651–721 (DSEEEGDLCR…EMCKQGLLVD (71 aa)). Positions 659, 662, 677, 679, 687, 690, 711, and 714 each coordinate Zn(2+). Residues 773–808 (ERERLSRNYPQPRTEENENSELGDGNEGSISQSQVV) form a disordered region.

The catalysed reaction is S-ubiquitinyl-[E2 ubiquitin-conjugating enzyme]-L-cysteine + [acceptor protein]-L-lysine = [E2 ubiquitin-conjugating enzyme]-L-cysteine + N(6)-ubiquitinyl-[acceptor protein]-L-lysine.. The protein operates within protein modification; protein ubiquitination. E3 ubiquitin-protein ligase. E3 ubiquitin ligases accept ubiquitin from an E2 ubiquitin-conjugating enzyme in the form of a thioester and then directly transfer the ubiquitin to targeted substrates. The chain is Probable E3 ubiquitin-protein ligase MARCHF10 from Homo sapiens (Human).